Consider the following 1703-residue polypeptide: Ferlin 2 (1703 aa).

C2 domains lie at Ile-18–Leu-141 and Lys-207–Phe-332. Disordered regions lie at residues Asn-913–Asn-937, Asn-970–Thr-1025, and Lys-1194–Gly-1228. Positions Asn-916–Asp-928 are enriched in acidic residues. The segment covering Gln-979–Ser-991 has biased composition (polar residues). The span at Ser-993 to Ser-1009 shows a compositional bias: basic and acidic residues. The span at Asn-1198–Ser-1209 shows a compositional bias: low complexity. The C2 3 domain maps to Val-1466–Phe-1595. The segment at Ala-1628–Lys-1651 is disordered. The span at Pro-1641–Lys-1651 shows a compositional bias: basic and acidic residues. The chain crosses the membrane as a helical span at residues Phe-1681 to Leu-1701.

It belongs to the ferlin family.

The protein localises to the membrane. In terms of biological role, regulates mucocyst exocytosis. The chain is Ferlin 2 from Tetrahymena thermophila (strain SB210).